The following is an 897-amino-acid chain: 3'-5' exonuclease DinG (897 aa).

Residues 8 to 161 enclose the Exonuclease domain; it reads VVDLETTGNQ…DEDAATTAKL (154 aa). The Helicase ATP-binding domain occupies 241 to 496; sequence SKAVDQLGLT…KAIDQLEKQR (256 aa). 276–283 contributes to the ATP binding site; it reads ASLGSGKS. The short motif at 448–451 is the DEAH box element; that stretch reads DEAH. The region spanning 703–883 is the Helicase C-terminal domain; the sequence is NIDEYVASIV…NYRQKKGDIQ (181 aa).

Belongs to the helicase family. DinG subfamily. Type 2 sub-subfamily.

In terms of biological role, 3'-5' exonuclease. This chain is 3'-5' exonuclease DinG, found in Staphylococcus aureus (strain bovine RF122 / ET3-1).